Consider the following 429-residue polypeptide: Glutamate-1-semialdehyde 2,1-aminomutase 2 (429 aa).

Position 268 is an N6-(pyridoxal phosphate)lysine (lysine 268).

The protein belongs to the class-III pyridoxal-phosphate-dependent aminotransferase family. HemL subfamily. As to quaternary structure, homodimer. It depends on pyridoxal 5'-phosphate as a cofactor.

It is found in the cytoplasm. The catalysed reaction is (S)-4-amino-5-oxopentanoate = 5-aminolevulinate. The protein operates within porphyrin-containing compound metabolism; protoporphyrin-IX biosynthesis; 5-aminolevulinate from L-glutamyl-tRNA(Glu): step 2/2. This Staphylococcus epidermidis (strain ATCC 35984 / DSM 28319 / BCRC 17069 / CCUG 31568 / BM 3577 / RP62A) protein is Glutamate-1-semialdehyde 2,1-aminomutase 2.